The following is a 510-amino-acid chain: 1,3-beta-glucanosyltransferase gas5 (510 aa).

Residues 1-22 (MNFLHFLTTSLLLLGGSRLALA) form the signal peptide. Residues cysteine 70 and cysteine 99 are joined by a disulfide bond. Tyrosine 88 contacts (1,3-beta-D-glucosyl)n. The N-linked (GlcNAc...) asparagine glycan is linked to asparagine 147. Asparagine 158, glutamate 159, aspartate 200, and arginine 205 together coordinate (1,3-beta-D-glucosyl)n. Glutamate 159 (proton donor) is an active-site residue. 2 cysteine pairs are disulfide-bonded: cysteine 214/cysteine 353 and cysteine 232/cysteine 264. Residues asparagine 216 and asparagine 252 are each glycosylated (N-linked (GlcNAc...) asparagine). Glutamate 261 functions as the Nucleophile in the catalytic mechanism. Tyrosine 300 lines the (1,3-beta-D-glucosyl)n pocket. Residues asparagine 318, asparagine 337, and asparagine 397 are each glycosylated (N-linked (GlcNAc...) asparagine). The disordered stretch occupies residues 424–456 (QSSTSGSSSGSSSASTTASSSSVSSGSSISSGS). A lipid anchor (GPI-anchor amidated serine) is attached at serine 485. The propeptide at 486-510 (SASTFNLSRFYVFAGILAISGLVFA) is removed in mature form. N-linked (GlcNAc...) asparagine glycosylation is present at asparagine 491.

The protein belongs to the glycosyl hydrolase 72 family. In terms of processing, the GPI-anchor is attached to the protein in the endoplasmic reticulum and serves to target the protein to the cell surface. There, the glucosamine-inositol phospholipid moiety is cleaved off and the GPI-modified mannoprotein is covalently attached via its lipidless GPI glycan remnant to the 1,6-beta-glucan of the outer cell wall layer.

It is found in the secreted. It localises to the cell wall. The protein resides in the membrane. In terms of biological role, splits internally a 1,3-beta-glucan molecule and transfers the newly generated reducing end (the donor) to the non-reducing end of another 1,3-beta-glucan molecule (the acceptor) forming a 1,3-beta linkage, resulting in the elongation of 1,3-beta-glucan chains in the cell wall. This is 1,3-beta-glucanosyltransferase gas5 (gas5) from Schizosaccharomyces pombe (strain 972 / ATCC 24843) (Fission yeast).